The following is a 200-amino-acid chain: Ribonuclease HII (200 aa).

The RNase H type-2 domain occupies 1 to 200 (MRYGGVDEAG…EINKKLTDFI (200 aa)). Residues Asp-7, Glu-8, and Asp-99 each contribute to the a divalent metal cation site.

This sequence belongs to the RNase HII family. Requires Mn(2+) as cofactor. The cofactor is Mg(2+).

The protein localises to the cytoplasm. It catalyses the reaction Endonucleolytic cleavage to 5'-phosphomonoester.. In terms of biological role, endonuclease that specifically degrades the RNA of RNA-DNA hybrids. This Nanoarchaeum equitans (strain Kin4-M) protein is Ribonuclease HII.